Consider the following 106-residue polypeptide: PAT complex subunit Asterix (106 aa).

Residues 1-29 are disordered; it reads MSTNNMSDPRRPNKVLRYKPPPSECNPAL. Serine 2 carries the post-translational modification N-acetylserine. Residues 2–32 lie on the Cytoplasmic side of the membrane; sequence STNNMSDPRRPNKVLRYKPPPSECNPALDDP. Residues 33–51 traverse the membrane as a helical segment; the sequence is TPDYMNLLGMIFSMCGLML. Lysine 52 is a topological domain (lumenal). A helical transmembrane segment spans residues 53-70; the sequence is LKWCAWVAVYCSFISFAN. Over 71-74 the chain is Cytoplasmic; it reads SRSS. The helical transmembrane segment at 75-95 threads the bilayer; the sequence is EDTKQMMSSFMLSISAVVMSY. The Lumenal segment spans residues 96–106; it reads LQNPQPMTPPW.

Belongs to the Asterix family. As to quaternary structure, component of the PAT complex, composed of WDR83OS/Asterix and CCDC47. The PAT complex is part of the multi-pass translocon (MPT) complex, composed of three subcomplexes, the GEL complex (composed of RAB5IF/OPTI and TMCO1), the BOS complex (composed of NCLN/Nicalin, NOMO1 and TMEM147) and the PAT complex (composed of WDR83OS/Asterix and CCDC47). The MPT complex associates with the SEC61 complex.

The protein resides in the endoplasmic reticulum membrane. Functionally, component of the multi-pass translocon (MPT) complex that mediates insertion of multi-pass membrane proteins into the lipid bilayer of membranes. The MPT complex takes over after the SEC61 complex: following membrane insertion of the first few transmembrane segments of proteins by the SEC61 complex, the MPT complex occludes the lateral gate of the SEC61 complex to promote insertion of subsequent transmembrane regions. Within the MPT complex, the PAT subcomplex sequesters any highly polar regions in the transmembrane domains away from the non-polar membrane environment until they can be buried in the interior of the fully assembled protein. Within the PAT subcomplex, WDR83OS/Asterix binds to and redirects the substrate to a location behind the SEC61 complex. The sequence is that of PAT complex subunit Asterix (WDR83OS) from Canis lupus familiaris (Dog).